A 196-amino-acid polypeptide reads, in one-letter code: Adenylate kinase (196 aa).

9–17 (GIPGVGKST) contacts ATP.

This sequence belongs to the archaeal adenylate kinase family.

It is found in the cytoplasm. The enzyme catalyses AMP + ATP = 2 ADP. In Pyrococcus abyssi (strain GE5 / Orsay), this protein is Adenylate kinase (adkA).